The chain runs to 1072 residues: Carbamoyl phosphate synthase large chain (1072 aa).

The interval 1–401 (MPKYKDINKV…SLLKAVRSLE (401 aa)) is carboxyphosphate synthetic domain. Residues R129, R169, G175, G176, K208, L210, E215, G241, V242, H243, Q284, and E298 each coordinate ATP. The ATP-grasp 1 domain maps to 133-327 (KRKMQEIGEP…IAKIAAKIAI (195 aa)). Residues Q284, E298, and N300 each contribute to the Mg(2+) site. Residues Q284, E298, and N300 each coordinate Mn(2+). The oligomerization domain stretch occupies residues 402–544 (IKAYGLRLNN…YIYSTYGEED (143 aa)). Residues 545–929 (EVEIHDMPKV…ALYKALEGAG (385 aa)) form a carbamoyl phosphate synthetic domain region. Residues 671–861 (SKLLRELNIN…MVKLAVEVAL (191 aa)) enclose the ATP-grasp 2 domain. Residues R707, K746, I748, E752, G777, V778, H779, S780, Q820, and E832 each contribute to the ATP site. Mg(2+) is bound by residues Q820, E832, and N834. The Mn(2+) site is built by Q820, E832, and N834. The MGS-like domain maps to 930 to 1072 (LKIPKKGKIL…QKDNVKNLVL (143 aa)). The segment at 930 to 1072 (LKIPKKGKIL…QKDNVKNLVL (143 aa)) is allosteric domain.

This sequence belongs to the CarB family. In terms of assembly, composed of two chains; the small (or glutamine) chain promotes the hydrolysis of glutamine to ammonia, which is used by the large (or ammonia) chain to synthesize carbamoyl phosphate. Tetramer of heterodimers (alpha,beta)4. Mg(2+) serves as cofactor. It depends on Mn(2+) as a cofactor.

It carries out the reaction hydrogencarbonate + L-glutamine + 2 ATP + H2O = carbamoyl phosphate + L-glutamate + 2 ADP + phosphate + 2 H(+). It catalyses the reaction hydrogencarbonate + NH4(+) + 2 ATP = carbamoyl phosphate + 2 ADP + phosphate + 2 H(+). It functions in the pathway amino-acid biosynthesis; L-arginine biosynthesis; carbamoyl phosphate from bicarbonate: step 1/1. Its pathway is pyrimidine metabolism; UMP biosynthesis via de novo pathway; (S)-dihydroorotate from bicarbonate: step 1/3. Large subunit of the glutamine-dependent carbamoyl phosphate synthetase (CPSase). CPSase catalyzes the formation of carbamoyl phosphate from the ammonia moiety of glutamine, carbonate, and phosphate donated by ATP, constituting the first step of 2 biosynthetic pathways, one leading to arginine and/or urea and the other to pyrimidine nucleotides. The large subunit (synthetase) binds the substrates ammonia (free or transferred from glutamine from the small subunit), hydrogencarbonate and ATP and carries out an ATP-coupled ligase reaction, activating hydrogencarbonate by forming carboxy phosphate which reacts with ammonia to form carbamoyl phosphate. In Thermoanaerobacter pseudethanolicus (strain ATCC 33223 / 39E) (Clostridium thermohydrosulfuricum), this protein is Carbamoyl phosphate synthase large chain.